The following is a 505-amino-acid chain: ADP-ribosylarginine hydrolase CG2909 (505 aa).

Positions 198, 336, 338, 340, 341, 342, 377, 432, 439, 440, 450, and 451 each coordinate ADP-D-ribose.

It catalyses the reaction N(omega)-(ADP-D-ribosyl)-L-arginyl-[protein] + H2O = ADP-D-ribose + L-arginyl-[protein]. The enzyme catalyses N(omega)-(ADP-D-ribosyl)-L-arginine + H2O = ADP-D-ribose + L-arginine. Protein ADP-ribosyl hydrolase that specifically removes mono-ADP-ribosyl modifications from protein arginine residues. This Drosophila melanogaster (Fruit fly) protein is ADP-ribosylarginine hydrolase CG2909.